The following is a 122-amino-acid chain: Large ribosomal subunit protein uL14 (122 aa).

It belongs to the universal ribosomal protein uL14 family. In terms of assembly, part of the 50S ribosomal subunit. Forms a cluster with proteins L3 and L19. In the 70S ribosome, L14 and L19 interact and together make contacts with the 16S rRNA in bridges B5 and B8.

Its function is as follows. Binds to 23S rRNA. Forms part of two intersubunit bridges in the 70S ribosome. The chain is Large ribosomal subunit protein uL14 from Paracidovorax citrulli (strain AAC00-1) (Acidovorax citrulli).